Here is a 178-residue protein sequence, read N- to C-terminus: Nicotinamide-nucleotide adenylyltransferase (178 aa).

The protein belongs to the archaeal NMN adenylyltransferase family. Homohexamer.

Its subcellular location is the cytoplasm. The catalysed reaction is beta-nicotinamide D-ribonucleotide + ATP + H(+) = diphosphate + NAD(+). Its pathway is cofactor biosynthesis; NAD(+) biosynthesis; NAD(+) from nicotinamide D-ribonucleotide: step 1/1. This Methanothermobacter thermautotrophicus (strain ATCC 29096 / DSM 1053 / JCM 10044 / NBRC 100330 / Delta H) (Methanobacterium thermoautotrophicum) protein is Nicotinamide-nucleotide adenylyltransferase.